The following is a 665-amino-acid chain: Protein-arginine deiminase type-2 (665 aa).

D123, D125, D127, E131, N154, D156, D158, D166, D169, K171, D177, D180, E354, D389, F408, L411, and E412 together coordinate Ca(2+). The active-site Nucleophile is C647.

Belongs to the protein arginine deiminase family. In terms of assembly, homodimer. Ca(2+) is required as a cofactor. As to expression, spinal cord, submaxillary gland, cerebrum, cerebellum, and skeletal muscle.

It localises to the cytoplasm. The enzyme catalyses L-arginyl-[protein] + H2O = L-citrullyl-[protein] + NH4(+). Its function is as follows. Catalyzes the deimination of arginine residues of proteins. The sequence is that of Protein-arginine deiminase type-2 (Padi2) from Rattus norvegicus (Rat).